The following is a 186-amino-acid chain: Ribonuclease HII (186 aa).

An RNase H type-2 domain is found at 2–186; the sequence is KILAGVDEVG…KTFSPISDLL (185 aa). Positions 8, 9, and 99 each coordinate a divalent metal cation.

The protein belongs to the RNase HII family. It depends on Mn(2+) as a cofactor. Requires Mg(2+) as cofactor.

The protein resides in the cytoplasm. The enzyme catalyses Endonucleolytic cleavage to 5'-phosphomonoester.. Its function is as follows. Endonuclease that specifically degrades the RNA of RNA-DNA hybrids. The protein is Ribonuclease HII of Pelagibacter ubique (strain HTCC1062).